The chain runs to 112 residues: uncharacterized protein (112 aa).

Positions 39, 105, and 107 each coordinate Fe cation.

This sequence belongs to the HesB/IscA family. Ycf83 subfamily.

It is found in the plastid. It localises to the chloroplast. This is an uncharacterized protein from Galdieria sulphuraria (Red alga).